Reading from the N-terminus, the 696-residue chain is Translation factor waclaw, mitochondrial (696 aa).

The transit peptide at 1–76 (MIVGYSVFFH…RNLSTTNQVK (76 aa)) directs the protein to the mitochondrion. The 182-residue stretch at 97–278 (ERIRNFSIIA…RVIETVPPPQ (182 aa)) folds into the tr-type G domain. GTP-binding positions include 106–113 (AHVDHGKS), 171–175 (DTPGH), and 225–228 (NKID).

This sequence belongs to the TRAFAC class translation factor GTPase superfamily. Classic translation factor GTPase family. LepA subfamily.

It is found in the mitochondrion inner membrane. It catalyses the reaction GTP + H2O = GDP + phosphate + H(+). Functionally, promotes mitochondrial protein synthesis. May act as a fidelity factor of the translation reaction, by catalyzing a one-codon backward translocation of tRNAs on improperly translocated ribosomes. Binds to mitochondrial ribosomes in a GTP-dependent manner. This chain is Translation factor waclaw, mitochondrial, found in Drosophila melanogaster (Fruit fly).